A 1036-amino-acid chain; its full sequence is MRDLIAVQRNSYYTFLTKSLKEEFDKISPIVDYTGQLELHLITSKMELKPPKITPVQAKRQDITYSVGMYMPVQLWNHQTGDVRQQMIYFGEIPLMTEDATFIINGAERVVVNQIVRSPGVYFQALWDKQHVRTFEATFMANRGAWIKYELDKQKLLWVRLDKNRKMPLVIFLQALGLNLQEIKPHLTNREVFERSWENHAVNNTEAALVEFYKKMRPGEPATVHSAKQLLYARFFDPKKYDLSEVGRYKLNQKLHLDIPLSVHILTTSDLLAGLDYLIQLCLDRARVDDIDHLANRRLKCVGELLQNQVRIGLSRLEKLLREKMTIGEKLQPSSLLNPKPLTSAIREFFASSQLSQFMDQINPLAELTHKRRISALGAGGLTRERAGFAVRDIHPSHYGRICPIETPEGPNAGLIGSLAIFARVNRYGFIETPYYPVKKGQVQKSIVYLTADVEDNYRLAPADVKYDREGQICSPIVAVRYRQEWTTCDASHVDYMAISPIQFISAATCLIPFLEHDDANRALMGSNMQRQAVPLIRASKPYVSTGQEKWMVQGVFSKADGIVRSVQATSIRIQHARGPVDYALLKYQKSNQDTCIDYRPLVWVGEHVVKGQLIAQSAAMDSGELALGQNVLIAYMPWEGYNFEDAFVISERLVYEDVYTSIHIEKYETDARQTKLGAEQITRQIPNVGEHALRQLDEHGIISVGSWVEAGSILVGKITPKGESDQPPEGKLLRAIFGEKNQHVKDSSLRMPNGSRGRVIHVRILSRDQGDELPAGVNISVRVSVAVKRVIQVGDKMAGRHGNKGIVARILPRCDMPYLPDGTPVDVILNPLGVPSRMNVGQLFEALLGLAAHRLRKRIKIVPFDEMYHKEASRIFVHQQLKRAALSAQTILYDGRSGEKFDNAVTVGMAYMLKLVHLVDEKIHARSTGPYSLVTQQPLGGRAQHGGQRLGEMEVWALEAYGAAYTLQELLTLKSDDMEGRTATLNAIVKAQPIPRGGTPESFKVLMRELQALGLDVTVLQLESQALCVMQSKLD.

It belongs to the RNA polymerase beta chain family. In plastids the minimal PEP RNA polymerase catalytic core is composed of four subunits: alpha, beta, beta', and beta''. When a (nuclear-encoded) sigma factor is associated with the core the holoenzyme is formed, which can initiate transcription.

Its subcellular location is the plastid. It is found in the chloroplast. It carries out the reaction RNA(n) + a ribonucleoside 5'-triphosphate = RNA(n+1) + diphosphate. DNA-dependent RNA polymerase catalyzes the transcription of DNA into RNA using the four ribonucleoside triphosphates as substrates. This is DNA-directed RNA polymerase subunit beta from Cyanidioschyzon merolae (strain NIES-3377 / 10D) (Unicellular red alga).